A 336-amino-acid chain; its full sequence is Holliday junction branch migration complex subunit RuvB (336 aa).

Positions 1-183 (MTEEHLTSQE…FGIVEHMQYY (183 aa)) are large ATPase domain (RuvB-L). ATP contacts are provided by residues leucine 22, arginine 23, glycine 64, lysine 67, threonine 68, threonine 69, 130–132 (EDF), arginine 173, tyrosine 183, and arginine 220. A Mg(2+)-binding site is contributed by threonine 68. The small ATPAse domain (RuvB-S) stretch occupies residues 184 to 254 (QVEDLEKIIL…TTAMALKQLQ (71 aa)). Residues 257–336 (SAGLDQTDRK…LNLPLPGEEE (80 aa)) form a head domain (RuvB-H) region. Arginine 293 and arginine 317 together coordinate DNA.

The protein belongs to the RuvB family. Homohexamer. Forms an RuvA(8)-RuvB(12)-Holliday junction (HJ) complex. HJ DNA is sandwiched between 2 RuvA tetramers; dsDNA enters through RuvA and exits via RuvB. An RuvB hexamer assembles on each DNA strand where it exits the tetramer. Each RuvB hexamer is contacted by two RuvA subunits (via domain III) on 2 adjacent RuvB subunits; this complex drives branch migration. In the full resolvosome a probable DNA-RuvA(4)-RuvB(12)-RuvC(2) complex forms which resolves the HJ.

It localises to the cytoplasm. It carries out the reaction ATP + H2O = ADP + phosphate + H(+). Functionally, the RuvA-RuvB-RuvC complex processes Holliday junction (HJ) DNA during genetic recombination and DNA repair, while the RuvA-RuvB complex plays an important role in the rescue of blocked DNA replication forks via replication fork reversal (RFR). RuvA specifically binds to HJ cruciform DNA, conferring on it an open structure. The RuvB hexamer acts as an ATP-dependent pump, pulling dsDNA into and through the RuvAB complex. RuvB forms 2 homohexamers on either side of HJ DNA bound by 1 or 2 RuvA tetramers; 4 subunits per hexamer contact DNA at a time. Coordinated motions by a converter formed by DNA-disengaged RuvB subunits stimulates ATP hydrolysis and nucleotide exchange. Immobilization of the converter enables RuvB to convert the ATP-contained energy into a lever motion, pulling 2 nucleotides of DNA out of the RuvA tetramer per ATP hydrolyzed, thus driving DNA branch migration. The RuvB motors rotate together with the DNA substrate, which together with the progressing nucleotide cycle form the mechanistic basis for DNA recombination by continuous HJ branch migration. Branch migration allows RuvC to scan DNA until it finds its consensus sequence, where it cleaves and resolves cruciform DNA. The protein is Holliday junction branch migration complex subunit RuvB of Lactobacillus delbrueckii subsp. bulgaricus (strain ATCC 11842 / DSM 20081 / BCRC 10696 / JCM 1002 / NBRC 13953 / NCIMB 11778 / NCTC 12712 / WDCM 00102 / Lb 14).